The following is a 205-amino-acid chain: Ribosomal RNA small subunit methyltransferase G (205 aa).

Residues G76, L81, 127–128 (IE), and R140 contribute to the S-adenosyl-L-methionine site.

This sequence belongs to the methyltransferase superfamily. RNA methyltransferase RsmG family.

It is found in the cytoplasm. The catalysed reaction is guanosine(527) in 16S rRNA + S-adenosyl-L-methionine = N(7)-methylguanosine(527) in 16S rRNA + S-adenosyl-L-homocysteine. Specifically methylates the N7 position of guanine in position 527 of 16S rRNA. The polypeptide is Ribosomal RNA small subunit methyltransferase G (Francisella tularensis subsp. tularensis (strain WY96-3418)).